We begin with the raw amino-acid sequence, 108 residues long: UPF0145 protein Fnod_0426 (108 aa).

The protein belongs to the UPF0145 family.

The polypeptide is UPF0145 protein Fnod_0426 (Fervidobacterium nodosum (strain ATCC 35602 / DSM 5306 / Rt17-B1)).